A 235-amino-acid chain; its full sequence is Ferric nitrobindin-like protein (235 aa).

The tract at residues 1 to 59 (MSDLASEGSDPAERASEHSNGNAPADRPARRSGDQAVADAAERAKATGSRNIPVLPDLP) is disordered. A GXWXGXG motif is present at residues 85-91 (GVWRGEG).

This sequence belongs to the nitrobindin family.

The protein is Ferric nitrobindin-like protein of Nocardia farcinica (strain IFM 10152).